We begin with the raw amino-acid sequence, 441 residues long: Probable acetylornithine aminotransferase, mitochondrial (441 aa).

Lys-294 bears the N6-(pyridoxal phosphate)lysine mark.

This sequence belongs to the class-III pyridoxal-phosphate-dependent aminotransferase family. The cofactor is pyridoxal 5'-phosphate.

The protein resides in the mitochondrion matrix. The catalysed reaction is N(2)-acetyl-L-ornithine + 2-oxoglutarate = N-acetyl-L-glutamate 5-semialdehyde + L-glutamate. It functions in the pathway amino-acid biosynthesis; L-arginine biosynthesis; N(2)-acetyl-L-ornithine from L-glutamate: step 4/4. The protein is Probable acetylornithine aminotransferase, mitochondrial (arg1) of Schizosaccharomyces pombe (strain 972 / ATCC 24843) (Fission yeast).